Consider the following 212-residue polypeptide: Protein-L-isoaspartate O-methyltransferase (212 aa).

The active site involves S60.

The protein belongs to the methyltransferase superfamily. L-isoaspartyl/D-aspartyl protein methyltransferase family.

The protein resides in the cytoplasm. The catalysed reaction is [protein]-L-isoaspartate + S-adenosyl-L-methionine = [protein]-L-isoaspartate alpha-methyl ester + S-adenosyl-L-homocysteine. In terms of biological role, catalyzes the methyl esterification of L-isoaspartyl residues in peptides and proteins that result from spontaneous decomposition of normal L-aspartyl and L-asparaginyl residues. It plays a role in the repair and/or degradation of damaged proteins. This is Protein-L-isoaspartate O-methyltransferase from Methylorubrum populi (strain ATCC BAA-705 / NCIMB 13946 / BJ001) (Methylobacterium populi).